Here is a 747-residue protein sequence, read N- to C-terminus: Phenylalanine ammonia-lyase 2 (747 aa).

Residues 1–20 are compositionally biased toward polar residues; it reads MTILSGTTAAPRVNGTTMNG. The disordered stretch occupies residues 1–47; it reads MTILSGTTAAPRVNGTTMNGHSKPHTNGVHLNGHAPKATTESPWPQS. Tyr124 functions as the Proton donor/acceptor in the catalytic mechanism. A cross-link (5-imidazolinone (Ala-Gly)) is located at residues 229–231; it reads ASG. Ser230 bears the 2,3-didehydroalanine (Ser) mark. (E)-cinnamate-binding residues include Asn290, Gln380, Arg386, Asn416, Lys487, Glu515, and Asn518.

It belongs to the PAL/histidase family. As to quaternary structure, homotetramer. Post-translationally, contains an active site 4-methylidene-imidazol-5-one (MIO), which is formed autocatalytically by cyclization and dehydration of residues Ala-Ser-Gly.

The protein resides in the cytoplasm. It carries out the reaction L-phenylalanine = (E)-cinnamate + NH4(+). Its pathway is phenylpropanoid metabolism; trans-cinnamate biosynthesis; trans-cinnamate from L-phenylalanine: step 1/1. In terms of biological role, catalyzes the non-oxidative deamination of L-phenylalanine to form trans-cinnamic acid and a free ammonium ion. Facilitates the commitment step in phenylpropanoid pathways that produce secondary metabolites such as lignins, coumarins and flavonoids. This chain is Phenylalanine ammonia-lyase 2, found in Pleurotus ostreatus (Oyster mushroom).